The chain runs to 247 residues: 23S rRNA (guanosine-2'-O-)-methyltransferase RlmB (247 aa).

The S-adenosyl-L-methionine site is built by Gly-197, Ile-217, and Leu-226.

It belongs to the class IV-like SAM-binding methyltransferase superfamily. RNA methyltransferase TrmH family. RlmB subfamily.

The protein resides in the cytoplasm. It catalyses the reaction guanosine(2251) in 23S rRNA + S-adenosyl-L-methionine = 2'-O-methylguanosine(2251) in 23S rRNA + S-adenosyl-L-homocysteine + H(+). In terms of biological role, specifically methylates the ribose of guanosine 2251 in 23S rRNA. The protein is 23S rRNA (guanosine-2'-O-)-methyltransferase RlmB of Vibrio vulnificus (strain CMCP6).